An 88-amino-acid chain; its full sequence is Small ribosomal subunit protein bS20 (88 aa).

The tract at residues 1–27 (MANSKSAKKRALQSEKRRQHNASRRSM) is disordered.

This sequence belongs to the bacterial ribosomal protein bS20 family.

In terms of biological role, binds directly to 16S ribosomal RNA. This chain is Small ribosomal subunit protein bS20, found in Shewanella putrefaciens (strain CN-32 / ATCC BAA-453).